A 160-amino-acid chain; its full sequence is uncharacterized protein (160 aa).

Positions 1–18 are cleaved as a signal peptide; it reads MELLSLAILSSFFAVANQ.

This is an uncharacterized protein from Caenorhabditis elegans.